The chain runs to 553 residues: Vacuolar fusion protein MON1 homolog B (553 aa).

M1 is modified (N-acetylmethionine). Disordered stretches follow at residues 1-111 (MEAG…DEDW) and 534-553 (STPP…FTGL). A compositionally biased stretch (basic and acidic residues) spans 23–35 (FPREEAGDSERVH). Residues 52–72 (KDQPSSLLSPLPQTEAASSTC) show a composition bias toward polar residues. S57 carries the post-translational modification Phosphoserine. Residues 78–95 (AAASDSSPPGEPESNSEG) show a composition bias toward low complexity. Over residues 96–108 (QGEDPDDGGDPSD) the composition is skewed to acidic residues. Polar residues predominate over residues 541 to 553 (ADQAPNNGLFTGL).

This sequence belongs to the MON1/SAND family. In terms of assembly, interacts with CCNT2; down-regulates CCNT2-mediated activation of viral promoters during herpes simplex virus 1/HHV-1 infection. Found in a complex with RMC1, CCZ1 MON1A and MON1B.

The protein is Vacuolar fusion protein MON1 homolog B (Mon1b) of Mus musculus (Mouse).